Consider the following 229-residue polypeptide: MERVMNIIKPKPDPKQLLRDWQRKLRQECRNIERQIRDIQKEERNVQKAIKEAAKRNDMVSAKALAKEIVSSRRTVNRLYENKAQMNSISMHLGESVAIARTVGHLSKSAEVMKLVNNLMKAPQMAATMQEFSKEMTKAGVIEEFVNEAIDNALDSEDMEEEIDEEVDKVLTAIAGETAAELPVAVRKERIKVPAQKASTSREEEAVAEGVDDEEELEEIRARLAKVRS.

A coiled-coil region spans residues 15–60; the sequence is KQLLRDWQRKLRQECRNIERQIRDIQKEERNVQKAIKEAAKRNDMV. Positions 193–215 are disordered; the sequence is VPAQKASTSREEEAVAEGVDDEE. Residues 206 to 215 show a composition bias toward acidic residues; the sequence is AVAEGVDDEE.

The protein belongs to the SNF7 family. In terms of assembly, component of the endosomal sorting required for transport complex III (ESCRT-III), composed at least of VPS2, VPS20, VPS24 and VPS32. Interacts with SKD1.

The protein localises to the endosome. Component of the ESCRT-III complex, which is required for multivesicular bodies (MVBs) formation and sorting of endosomal cargo proteins into MVBs. The ESCRT-III complex is probably involved in the concentration of MVB cargo. This chain is Vacuolar protein sorting-associated protein 24 homolog 1 (VPS24-1), found in Arabidopsis thaliana (Mouse-ear cress).